A 341-amino-acid chain; its full sequence is L-threonine 3-dehydrogenase (341 aa).

Residue Cys38 participates in Zn(2+) binding. Catalysis depends on charge relay system residues Thr40 and His43. Residues His63, Glu64, Cys93, Cys96, Cys99, and Cys107 each coordinate Zn(2+). NAD(+)-binding positions include Ile175, Asp195, Arg200, Leu262 to Ile264, and Ile286 to Tyr287.

Belongs to the zinc-containing alcohol dehydrogenase family. In terms of assembly, homotetramer. Requires Zn(2+) as cofactor.

Its subcellular location is the cytoplasm. The catalysed reaction is L-threonine + NAD(+) = (2S)-2-amino-3-oxobutanoate + NADH + H(+). Its pathway is amino-acid degradation; L-threonine degradation via oxydo-reductase pathway; glycine from L-threonine: step 1/2. Functionally, catalyzes the NAD(+)-dependent oxidation of L-threonine to 2-amino-3-ketobutyrate. This is L-threonine 3-dehydrogenase from Shewanella woodyi (strain ATCC 51908 / MS32).